The chain runs to 304 residues: Ribonuclease Z (304 aa).

The Zn(2+) site is built by His63, His65, Asp67, His68, His143, Asp213, and His271. The active-site Proton acceptor is the Asp67.

Belongs to the RNase Z family. Homodimer. Zn(2+) is required as a cofactor.

The catalysed reaction is Endonucleolytic cleavage of RNA, removing extra 3' nucleotides from tRNA precursor, generating 3' termini of tRNAs. A 3'-hydroxy group is left at the tRNA terminus and a 5'-phosphoryl group is left at the trailer molecule.. Functionally, zinc phosphodiesterase, which displays some tRNA 3'-processing endonuclease activity. Probably involved in tRNA maturation, by removing a 3'-trailer from precursor tRNA. The protein is Ribonuclease Z of Porphyromonas gingivalis (strain ATCC 33277 / DSM 20709 / CIP 103683 / JCM 12257 / NCTC 11834 / 2561).